The primary structure comprises 293 residues: Elongation factor Ts (293 aa).

The segment at 80 to 83 is involved in Mg(2+) ion dislocation from EF-Tu; sequence TDFV.

The protein belongs to the EF-Ts family.

The protein localises to the cytoplasm. Functionally, associates with the EF-Tu.GDP complex and induces the exchange of GDP to GTP. It remains bound to the aminoacyl-tRNA.EF-Tu.GTP complex up to the GTP hydrolysis stage on the ribosome. The sequence is that of Elongation factor Ts from Janthinobacterium sp. (strain Marseille) (Minibacterium massiliensis).